The following is an 861-amino-acid chain: Isoleucine--tRNA ligase (861 aa).

The short motif at 57 to 67 is the 'HIGH' region element; the sequence is PYANGNIHVGH. An L-isoleucyl-5'-AMP-binding site is contributed by E549. A 'KMSKS' region motif is present at residues 590–594; that stretch reads KMSKS. An ATP-binding site is contributed by K593.

Belongs to the class-I aminoacyl-tRNA synthetase family. IleS type 1 subfamily. As to quaternary structure, monomer.

Its subcellular location is the cytoplasm. The enzyme catalyses tRNA(Ile) + L-isoleucine + ATP = L-isoleucyl-tRNA(Ile) + AMP + diphosphate. Functionally, catalyzes the attachment of isoleucine to tRNA(Ile). As IleRS can inadvertently accommodate and process structurally similar amino acids such as valine, to avoid such errors it has two additional distinct tRNA(Ile)-dependent editing activities. One activity is designated as 'pretransfer' editing and involves the hydrolysis of activated Val-AMP. The other activity is designated 'posttransfer' editing and involves deacylation of mischarged Val-tRNA(Ile). This Mycoplasma pneumoniae (strain ATCC 29342 / M129 / Subtype 1) (Mycoplasmoides pneumoniae) protein is Isoleucine--tRNA ligase.